The chain runs to 556 residues: Formate--tetrahydrofolate ligase 2 (556 aa).

65-72 (TPAGEGKS) is a binding site for ATP.

It belongs to the formate--tetrahydrofolate ligase family.

The catalysed reaction is (6S)-5,6,7,8-tetrahydrofolate + formate + ATP = (6R)-10-formyltetrahydrofolate + ADP + phosphate. It participates in one-carbon metabolism; tetrahydrofolate interconversion. In Streptococcus sanguinis (strain SK36), this protein is Formate--tetrahydrofolate ligase 2.